The chain runs to 517 residues: 2-isopropylmalate synthase (517 aa).

In terms of domain architecture, Pyruvate carboxyltransferase spans 5 to 268; sequence IIIFDTTLRD…DTRINTQEIH (264 aa). Asp14, His202, His204, and Asn238 together coordinate Mn(2+). Residues 393–517 form a regulatory domain region; the sequence is SLDVITSQTI…ADLKSHKISQ (125 aa).

It belongs to the alpha-IPM synthase/homocitrate synthase family. LeuA type 1 subfamily. As to quaternary structure, homodimer. Requires Mn(2+) as cofactor.

The protein localises to the cytoplasm. It catalyses the reaction 3-methyl-2-oxobutanoate + acetyl-CoA + H2O = (2S)-2-isopropylmalate + CoA + H(+). The protein operates within amino-acid biosynthesis; L-leucine biosynthesis; L-leucine from 3-methyl-2-oxobutanoate: step 1/4. Functionally, catalyzes the condensation of the acetyl group of acetyl-CoA with 3-methyl-2-oxobutanoate (2-ketoisovalerate) to form 3-carboxy-3-hydroxy-4-methylpentanoate (2-isopropylmalate). This is 2-isopropylmalate synthase from Histophilus somni (strain 2336) (Haemophilus somnus).